The sequence spans 451 residues: Serine/threonine-protein kinase VRK3 (451 aa).

2 disordered regions span residues 28–61 (KHEG…SKKV) and 74–125 (LPSE…MTAS). Positions 32–45 (SQSFVKPFTSSSQG) are enriched in polar residues. Residues 47-62 (RRKTNTSSETSSKKVK) carry the Nuclear localization signal motif. A phosphoserine mark is found at Ser53, Ser57, Ser80, Ser81, Ser88, and Ser106. Over residues 78–91 (GKSSGSEDTLSTSG) the composition is skewed to polar residues. Residues 98–116 (SRSPTPRSSPQTTRQSPQT) are compositionally biased toward low complexity. Residues 123–434 (TASLEALPVG…TLRNELEALL (312 aa)) form the Protein kinase domain.

Belongs to the protein kinase superfamily. CK1 Ser/Thr protein kinase family. VRK subfamily. Interacts with DUSP3. Interacts with RAN. Interacts with HSP70/HSPA1A. Phosphorylated at Ser-106 by CDK5; leading to protection of the cell against H2O2-induced apoptosis. Post-translationally, ubiquitinated by RNF144A.

It localises to the nucleus. Its subcellular location is the cytoplasm. The catalysed reaction is L-seryl-[protein] + ATP = O-phospho-L-seryl-[protein] + ADP + H(+). Its function is as follows. Plays a role in the regulation of the cell cycle by phosphorylating the nuclear envelope protein barrier-to-autointegration factor/BAF that is required for disassembly and reassembly, respectively, of the nuclear envelope during mitosis. Under normal physiological conditions, negatively regulates ERK activity along with VHR phosphatase in the nucleus, causing timely and transient action of ERK. Stress conditions activate CDK5 which phosphorylates VRK3 to increase VHR phosphatase activity and suppress prolonged ERK activation that causes cell death. For example, upon glutamate induction, promotes nuclear localization of HSP70/HSPA1A to inhibit ERK activation via VHR phosphatase. This Bos taurus (Bovine) protein is Serine/threonine-protein kinase VRK3 (VRK3).